The sequence spans 419 residues: CinA-like protein (419 aa).

The protein belongs to the CinA family.

This is CinA-like protein from Acaryochloris marina (strain MBIC 11017).